Consider the following 492-residue polypeptide: Aspartyl/glutamyl-tRNA(Asn/Gln) amidotransferase subunit B (492 aa).

It belongs to the GatB/GatE family. GatB subfamily. Heterotrimer of A, B and C subunits.

The catalysed reaction is L-glutamyl-tRNA(Gln) + L-glutamine + ATP + H2O = L-glutaminyl-tRNA(Gln) + L-glutamate + ADP + phosphate + H(+). It catalyses the reaction L-aspartyl-tRNA(Asn) + L-glutamine + ATP + H2O = L-asparaginyl-tRNA(Asn) + L-glutamate + ADP + phosphate + 2 H(+). Allows the formation of correctly charged Asn-tRNA(Asn) or Gln-tRNA(Gln) through the transamidation of misacylated Asp-tRNA(Asn) or Glu-tRNA(Gln) in organisms which lack either or both of asparaginyl-tRNA or glutaminyl-tRNA synthetases. The reaction takes place in the presence of glutamine and ATP through an activated phospho-Asp-tRNA(Asn) or phospho-Glu-tRNA(Gln). The polypeptide is Aspartyl/glutamyl-tRNA(Asn/Gln) amidotransferase subunit B (Dehalococcoides mccartyi (strain CBDB1)).